We begin with the raw amino-acid sequence, 697 residues long: UBA domain-containing protein 7 (697 aa).

A disordered region spans residues 1-94; it reads MDDLLDFNFY…STPKSSNYDP (94 aa). Positions 13–32 are enriched in low complexity; sequence STPSNQNNYSNNNSRTPSYS. A compositionally biased stretch (basic and acidic residues) spans 62-77; it reads KKTDNKISLKELERQK. A compositionally biased stretch (polar residues) spans 81-92; that stretch reads PDSNSTPKSSNY. The UBA domain maps to 181-221; the sequence is KLSSNEMYEKLRDLGFSDDQSRLALENSGSLEDAIEYILEK. Residues 306 to 346 form a disordered region; it reads PEILPKTPIPKRKPHKVPMNEKVSEDRITTNQSRSGNDESS. Residues 323–333 show a composition bias toward basic and acidic residues; sequence PMNEKVSEDRI. The span at 334–345 shows a compositional bias: polar residues; the sequence is TTNQSRSGNDES. The stretch at 412 to 445 is one TPR repeat; it reads VEEQQSTGNELFRKGDFSQAIEEFTNSLSQLPAK. The tract at residues 547-573 is disordered; it reads ISSHSSESHSKRTTQQPKSTPNHTNIK. The span at 559-573 shows a compositional bias: polar residues; that stretch reads TTQQPKSTPNHTNIK. In terms of domain architecture, J spans 633–696; the sequence is CRWQKVSLSE…AWELFKQQND (64 aa).

This chain is UBA domain-containing protein 7 (ucp7), found in Schizosaccharomyces pombe (strain 972 / ATCC 24843) (Fission yeast).